Consider the following 313-residue polypeptide: MTNQGSGPQPAHRSGFVSFVGRPNAGKSTLTNALVGSKVVITSDKPQTTRTVVRGIVHRDDAQLILVDTPGLHRPRTLLGERLNDLVKTTLAEVDVVAVCLPANEKVGPGDRFIVNEMAKIKRTTKVAIATKTDLASPDRIAEHLLDIARLGTETGTEWAEIVPVSAKSGDQVELLADLLVGLLPEGPQLYPDGDLSDAPEEILAAELIREAALEGLRDELPHSVAVVVEEMGLREGRPDAKPLLDIHANVYVERDSQKGIIIGPKGARLRDIGTRARGQIEALLGTPVYLDLHVKIAKDWQRDPRQLRKLGF.

The Era-type G domain maps to 13-186 (RSGFVSFVGR…ADLLVGLLPE (174 aa)). The G1 stretch occupies residues 21–28 (GRPNAGKS). 21–28 (GRPNAGKS) contributes to the GTP binding site. A G2 region spans residues 47–51 (QTTRT). The tract at residues 68–71 (DTPG) is G3. GTP contacts are provided by residues 68–72 (DTPGL) and 131–134 (TKTD). Residues 131 to 134 (TKTD) are G4. The interval 165-167 (VSA) is G5. One can recognise a KH type-2 domain in the interval 217-299 (LRDELPHSVA…YLDLHVKIAK (83 aa)).

The protein belongs to the TRAFAC class TrmE-Era-EngA-EngB-Septin-like GTPase superfamily. Era GTPase family. As to quaternary structure, monomer.

The protein resides in the cytoplasm. It localises to the cell membrane. Its function is as follows. An essential GTPase that binds both GDP and GTP, with rapid nucleotide exchange. Plays a role in 16S rRNA processing and 30S ribosomal subunit biogenesis and possibly also in cell cycle regulation and energy metabolism. This chain is GTPase Era, found in Nocardioides sp. (strain ATCC BAA-499 / JS614).